Here is a 110-residue protein sequence, read N- to C-terminus: UPF0060 membrane protein Bamb_1160 (110 aa).

A run of 4 helical transmembrane segments spans residues 9–29, 34–54, 66–86, and 88–108; these read ALFA…WLVL, PVWL…LLTL, YGGV…GVAL, and RWDA…ALQP.

This sequence belongs to the UPF0060 family.

The protein localises to the cell inner membrane. The protein is UPF0060 membrane protein Bamb_1160 of Burkholderia ambifaria (strain ATCC BAA-244 / DSM 16087 / CCUG 44356 / LMG 19182 / AMMD) (Burkholderia cepacia (strain AMMD)).